The following is a 1029-amino-acid chain: Tyrosine-protein kinase-like otk (1029 aa).

The first 18 residues, 1–18 (MISIYGLVMALMMASVLA), serve as a signal peptide directing secretion. The Extracellular portion of the chain corresponds to 19 to 577 (SSSRFQRVPQ…GGDGFLVTRA (559 aa)). Ig-like C2-type domains lie at 21 to 104 (SRFQ…REAS), 105 to 195 (PPAK…RVMS), 247 to 361 (PEDL…APIS), 364 to 459 (PGIL…VAIN), and 464 to 554 (PKFS…VQLV). An N-linked (GlcNAc...) asparagine glycan is attached at N35. 4 disulfide bridges follow: C42–C91, C133–C184, C272–C350, and C395–C443. Residues N332, N413, N425, N440, N453, N508, and N520 are each glycosylated (N-linked (GlcNAc...) asparagine). C486 and C538 are disulfide-bonded. The chain crosses the membrane as a helical span at residues 578-598 (VLITMTVALAYIVLVVGLMLW). The Cytoplasmic segment spans residues 599–1029 (CRYRRQARKA…LSKAMQIAEK (431 aa)). Disordered regions lie at residues 613–675 (LSTK…KKSA) and 714–756 (SPSD…KTSM). Over residues 651–669 (KSSGDAQKSDDTACSQQSR) the composition is skewed to polar residues. S674 is subject to Phosphoserine. The region spanning 688 to 1024 (LSELIQIGRG…QLGAALSKAM (337 aa)) is the Protein kinase; inactive domain. Residues 716 to 727 (SDKDADTEKQHS) are compositionally biased toward basic and acidic residues.

This sequence belongs to the protein kinase superfamily. Tyr protein kinase family. Insulin receptor subfamily. As to quaternary structure, interacts with plexA; component of a receptor complex that mediates the repulsive signaling in response to Semaphorin ligands.

It localises to the cell membrane. Acts as a calcium-dependent, homophilic cell adhesion molecule that regulates neural recognition during the development of the nervous system. Component of the repulsive Plexin signaling response to regulate motor axon guidance at the embryonic stage. Also component of a receptor complex that is required in the adult visual system to innervate the lamina layer; specific targeting of R1-R6 axons. The chain is Tyrosine-protein kinase-like otk from Drosophila sechellia (Fruit fly).